The sequence spans 783 residues: Cation/H(+) antiporter 2 (783 aa).

Helical transmembrane passes span 19–39 (LNTMFIQMACILVFSQLFYLL), 43–63 (CGQAGPVAQILAGIVLSPVLL), 81–101 (YYSFFSFALRTSFMFLIGLEV), 121–141 (FVVSGLLSFASLMLFIPLFGI), 145–165 (YFTFFLVLLVTLSNTASPVVV), 186–206 (ALFIELTNVVLYTIIMAFISG), 208–228 (IILELFLFLLATVALILINMV), 242–262 (YLSKAETLVFFIFLLIIGITI), 300–320 (EFVLPVYFGYIGFRFSIIALT), 323–343 (FYLGIVIIVIVTIAGKFIGVI), 355–375 (YWLFLPTILSVKGHVGLLLLD), and 391–411 (MMVAALVITTLVSGVLASFLL).

The protein belongs to the monovalent cation:proton antiporter 2 (CPA2) transporter (TC 2.A.37) family. CHX (TC 2.A.37.4) subfamily. In terms of tissue distribution, specifically expressed in pollen.

It is found in the membrane. Functionally, may operate as a cation/H(+) antiporter. The polypeptide is Cation/H(+) antiporter 2 (CHX2) (Arabidopsis thaliana (Mouse-ear cress)).